The following is a 92-amino-acid chain: Small ribosomal subunit protein uS19c (92 aa).

Residues 73 to 92 form a disordered region; it reads EFSPTRTYRGHAKKDKKAKR. The span at 80 to 92 shows a compositional bias: basic residues; the sequence is YRGHAKKDKKAKR.

Belongs to the universal ribosomal protein uS19 family.

The protein localises to the plastid. It is found in the chloroplast. Functionally, protein S19 forms a complex with S13 that binds strongly to the 16S ribosomal RNA. The sequence is that of Small ribosomal subunit protein uS19c (rps19) from Chlamydomonas reinhardtii (Chlamydomonas smithii).